A 264-amino-acid polypeptide reads, in one-letter code: Taurine import ATP-binding protein TauB (264 aa).

Residues 4–233 form the ABC transporter domain; it reads LQLERISAQY…RYAAGESARA (230 aa). 38–45 contacts ATP; the sequence is GPSGSGKT.

The protein belongs to the ABC transporter superfamily. Taurine importer (TC 3.A.1.17.1) family. As to quaternary structure, the complex is composed of two ATP-binding proteins (TauB), two transmembrane proteins (TauC) and a solute-binding protein (TauA).

The protein localises to the cell inner membrane. It catalyses the reaction taurine(out) + ATP + H2O = taurine(in) + ADP + phosphate + H(+). Part of the ABC transporter complex TauABC involved in taurine import. Responsible for energy coupling to the transport system. The protein is Taurine import ATP-binding protein TauB of Pseudomonas fluorescens (strain Pf0-1).